Consider the following 66-residue polypeptide: Large ribosomal subunit protein bL31 (66 aa).

4 residues coordinate Zn(2+): Cys16, Cys18, Cys36, and Cys39.

The protein belongs to the bacterial ribosomal protein bL31 family. Type A subfamily. Part of the 50S ribosomal subunit. Zn(2+) serves as cofactor.

Functionally, binds the 23S rRNA. The chain is Large ribosomal subunit protein bL31 from Campylobacter fetus subsp. fetus (strain 82-40).